Reading from the N-terminus, the 486-residue chain is D-mannonate oxidoreductase (486 aa).

25–36 (IVHLGCGAFHRA) is a binding site for NAD(+).

Belongs to the mannitol dehydrogenase family. UxuB subfamily.

The enzyme catalyses D-mannonate + NAD(+) = keto-D-fructuronate + NADH + H(+). It participates in carbohydrate metabolism; pentose and glucuronate interconversion. The chain is D-mannonate oxidoreductase (uxuB) from Escherichia coli (strain K12).